The chain runs to 501 residues: Membrane-bound lytic murein transglycosylase F (501 aa).

The signal sequence occupies residues 1-29 (MTKILLNTASTVLTRLWKLSLLGLVFAVA). Residues 30-274 (AATLVSSRIP…DAMETFYGHL (245 aa)) form a non-LT domain region. The tract at residues 275–501 (GEIDYSGAIL…VKSISGTSSL (227 aa)) is LT domain. Residue Glu321 is part of the active site.

It in the N-terminal section; belongs to the bacterial solute-binding protein 3 family. In the C-terminal section; belongs to the transglycosylase Slt family.

Its subcellular location is the cell outer membrane. It catalyses the reaction Exolytic cleavage of the (1-&gt;4)-beta-glycosidic linkage between N-acetylmuramic acid (MurNAc) and N-acetylglucosamine (GlcNAc) residues in peptidoglycan, from either the reducing or the non-reducing ends of the peptidoglycan chains, with concomitant formation of a 1,6-anhydrobond in the MurNAc residue.. Its function is as follows. Murein-degrading enzyme that degrades murein glycan strands and insoluble, high-molecular weight murein sacculi, with the concomitant formation of a 1,6-anhydromuramoyl product. Lytic transglycosylases (LTs) play an integral role in the metabolism of the peptidoglycan (PG) sacculus. Their lytic action creates space within the PG sacculus to allow for its expansion as well as for the insertion of various structures such as secretion systems and flagella. This chain is Membrane-bound lytic murein transglycosylase F, found in Saccharophagus degradans (strain 2-40 / ATCC 43961 / DSM 17024).